A 486-amino-acid chain; its full sequence is UDP-N-acetylmuramoyl-L-alanyl-D-glutamate--2,6-diaminopimelate ligase (486 aa).

Ser-34 lines the UDP-N-acetyl-alpha-D-muramoyl-L-alanyl-D-glutamate pocket. Residue 112–118 (GTAGKTS) coordinates ATP. UDP-N-acetyl-alpha-D-muramoyl-L-alanyl-D-glutamate-binding positions include 154–155 (TT), Ser-181, Gln-187, and Arg-189. Residue Lys-221 is modified to N6-carboxylysine. Meso-2,6-diaminopimelate-binding positions include Arg-385, 409-412 (DNPR), Gly-457, and Glu-461. Positions 409 to 412 (DNPR) match the Meso-diaminopimelate recognition motif motif.

The protein belongs to the MurCDEF family. MurE subfamily. Mg(2+) is required as a cofactor. In terms of processing, carboxylation is probably crucial for Mg(2+) binding and, consequently, for the gamma-phosphate positioning of ATP.

It localises to the cytoplasm. It carries out the reaction UDP-N-acetyl-alpha-D-muramoyl-L-alanyl-D-glutamate + meso-2,6-diaminopimelate + ATP = UDP-N-acetyl-alpha-D-muramoyl-L-alanyl-gamma-D-glutamyl-meso-2,6-diaminopimelate + ADP + phosphate + H(+). It participates in cell wall biogenesis; peptidoglycan biosynthesis. Functionally, catalyzes the addition of meso-diaminopimelic acid to the nucleotide precursor UDP-N-acetylmuramoyl-L-alanyl-D-glutamate (UMAG) in the biosynthesis of bacterial cell-wall peptidoglycan. The chain is UDP-N-acetylmuramoyl-L-alanyl-D-glutamate--2,6-diaminopimelate ligase from Rhizobium meliloti (strain 1021) (Ensifer meliloti).